The primary structure comprises 260 residues: CD320 antigen (260 aa).

The N-terminal stretch at 1–28 is a signal peptide; sequence MARGGAGRAVALGLVLRLLFGLRTGLEA. Over 29-208 the chain is Extracellular; that stretch reads APAPAHTRVQ…DSSRNPSAYG (180 aa). One can recognise an LDL-receptor class A 1 domain in the interval 46 to 83; it reads SCPTDTFQCLTSGYCVPLSWRCDGDQDCSDGSDEEDCR. Disulfide bonds link C47/C60, C54/C73, and C67/C82. Ca(2+) contacts are provided by W65, D68, D70, D72, D78, and E79. N-linked (GlcNAc...) asparagine glycosylation occurs at N118. The 38-residue stretch at 123 to 160 folds into the LDL-receptor class A 2 domain; it reads PCQESELHCILDDVCIPHTWRCDGHPDCLDSSDELSCD. 3 disulfides stabilise this stretch: C124/C137, C131/C150, and C144/C159. 6 residues coordinate Ca(2+): W142, D145, H147, D149, D155, and E156. N-linked (GlcNAc...) asparagine glycosylation is present at N185. The helical transmembrane segment at 209-229 threads the bilayer; the sequence is VIAAAGVLSAILVSATLLILL. At 230-260 the chain is on the cytoplasmic side; the sequence is RLRGQGYLPPPGLLVAVKESLLLSERKTSLI.

Interacts (via LDL-receptor class A domains) with TCN2.

The protein resides in the cell membrane. In terms of biological role, receptor for transcobalamin saturated with cobalamin (TCbl). Plays an important role in cobalamin uptake. Plasma membrane protein that is expressed on follicular dendritic cells (FDC) and mediates interaction with germinal center B cells. Functions as a costimulator to promote B cell responses to antigenic stimuli; promotes B cell differentiation and proliferation. Germinal center-B (GC-B) cells differentiate into memory B-cells and plasma cells (PC) through interaction with T-cells and follicular dendritic cells (FDC). CD320 augments the proliferation of PC precursors generated by IL-10. The polypeptide is CD320 antigen (Cd320) (Mus musculus (Mouse)).